A 356-amino-acid chain; its full sequence is NADH-quinone oxidoreductase subunit H (356 aa).

8 helical membrane passes run Ile-18 to Ile-38, Gly-87 to Ile-107, Val-120 to Gly-140, Ile-166 to Val-186, Trp-202 to Val-222, Ala-265 to Ile-285, Trp-292 to Met-312, and Leu-328 to Leu-348.

Belongs to the complex I subunit 1 family. As to quaternary structure, NDH-1 is composed of 14 different subunits. Subunits NuoA, H, J, K, L, M, N constitute the membrane sector of the complex.

It is found in the cell inner membrane. It carries out the reaction a quinone + NADH + 5 H(+)(in) = a quinol + NAD(+) + 4 H(+)(out). Functionally, NDH-1 shuttles electrons from NADH, via FMN and iron-sulfur (Fe-S) centers, to quinones in the respiratory chain. The immediate electron acceptor for the enzyme in this species is believed to be ubiquinone. Couples the redox reaction to proton translocation (for every two electrons transferred, four hydrogen ions are translocated across the cytoplasmic membrane), and thus conserves the redox energy in a proton gradient. This subunit may bind ubiquinone. The chain is NADH-quinone oxidoreductase subunit H from Nitrobacter hamburgensis (strain DSM 10229 / NCIMB 13809 / X14).